Reading from the N-terminus, the 34-residue chain is MSDIN-like toxin proprotein 2 (34 aa).

Residues Met1–Pro10 constitute a propeptide that is removed on maturation. A cross-link (cyclopeptide (Phe-Pro)) is located at residues Phe11–Pro20. Positions Cys21–Glu34 are excised as a propeptide.

It belongs to the MSDIN fungal toxin family. Processed by the macrocyclase-peptidase enzyme POPB to yield a toxic cyclic decapeptide. POPB first removes 10 residues from the N-terminus. Conformational trapping of the remaining peptide forces the enzyme to release this intermediate rather than proceed to macrocyclization. The enzyme rebinds the remaining peptide in a different conformation and catalyzes macrocyclization of the N-terminal 10 residues.

Probable toxin that belongs to the MSDIN-like toxin family responsible for a large number of food poisoning cases and deaths. The sequence is that of MSDIN-like toxin proprotein 2 from Amanita bisporigera (Destroying angel).